Reading from the N-terminus, the 475-residue chain is Trifunctional enzyme subunit beta, mitochondrial (475 aa).

The N-terminal 34 residues, 1–34 (MTTILTYPFKNLPTASKWALRFSIRPLSCSSQLR), are a transit peptide targeting the mitochondrion. Position 73 is an N6-acetyllysine; alternate (K73). K73 bears the N6-succinyllysine; alternate mark. The active-site Acyl-thioester intermediate is C139. An intramembrane segment occupies 174–221 (IRHSRKMRKLMLDLNKAKSMGQRLSLISKFRFNFLAPELPAVSEFSTS). An N6-acetyllysine; alternate modification is found at K189. Residue K189 is modified to N6-succinyllysine; alternate. 3 positions are modified to N6-succinyllysine: K191, K273, and K292. Residue K294 is modified to N6-acetyllysine; alternate. K294 is modified (N6-succinyllysine; alternate). Position 299 is an N6-acetyllysine (K299). K333 carries the post-translational modification N6-acetyllysine; alternate. An N6-succinyllysine; alternate modification is found at K333. An N6-acetyllysine mark is found at K349 and K362. Catalysis depends on C459, which acts as the Proton donor/acceptor.

This sequence belongs to the thiolase-like superfamily. Thiolase family. Heterotetramer of 2 alpha/HADHA and 2 beta/HADHB subunits; forms the mitochondrial trifunctional enzyme. Also purified as higher order heterooligomers including a 4 alpha/HADHA and 4 beta/HADHB heterooligomer which physiological significance remains unclear. The mitochondrial trifunctional enzyme interacts with MTLN. Interacts with RSAD2/viperin.

The protein localises to the mitochondrion. The protein resides in the mitochondrion inner membrane. It localises to the mitochondrion outer membrane. Its subcellular location is the endoplasmic reticulum. It carries out the reaction an acyl-CoA + acetyl-CoA = a 3-oxoacyl-CoA + CoA. The catalysed reaction is butanoyl-CoA + acetyl-CoA = 3-oxohexanoyl-CoA + CoA. The enzyme catalyses hexanoyl-CoA + acetyl-CoA = 3-oxooctanoyl-CoA + CoA. It catalyses the reaction octanoyl-CoA + acetyl-CoA = 3-oxodecanoyl-CoA + CoA. It carries out the reaction decanoyl-CoA + acetyl-CoA = 3-oxododecanoyl-CoA + CoA. The catalysed reaction is dodecanoyl-CoA + acetyl-CoA = 3-oxotetradecanoyl-CoA + CoA. The enzyme catalyses tetradecanoyl-CoA + acetyl-CoA = 3-oxohexadecanoyl-CoA + CoA. Its pathway is lipid metabolism; fatty acid beta-oxidation. Its function is as follows. Mitochondrial trifunctional enzyme catalyzes the last three of the four reactions of the mitochondrial beta-oxidation pathway. The mitochondrial beta-oxidation pathway is the major energy-producing process in tissues and is performed through four consecutive reactions breaking down fatty acids into acetyl-CoA. Among the enzymes involved in this pathway, the trifunctional enzyme exhibits specificity for long-chain fatty acids. Mitochondrial trifunctional enzyme is a heterotetrameric complex composed of two proteins, the trifunctional enzyme subunit alpha/HADHA carries the 2,3-enoyl-CoA hydratase and the 3-hydroxyacyl-CoA dehydrogenase activities, while the trifunctional enzyme subunit beta/HADHB described here bears the 3-ketoacyl-CoA thiolase activity. This chain is Trifunctional enzyme subunit beta, mitochondrial (HADHB), found in Pan troglodytes (Chimpanzee).